We begin with the raw amino-acid sequence, 265 residues long: Small ribosomal subunit protein eS4 (265 aa).

In terms of domain architecture, S4 RNA-binding spans 42–104 (LPLILIIRNR…TNENYRLLYD (63 aa)).

The protein belongs to the eukaryotic ribosomal protein eS4 family.

The protein resides in the cytoplasm. In Zea mays (Maize), this protein is Small ribosomal subunit protein eS4 (RPS4).